A 174-amino-acid polypeptide reads, in one-letter code: 3-hydroxyanthranilate 3,4-dioxygenase (174 aa).

Arg-47 is an O2 binding site. Positions 51, 57, and 95 each coordinate Fe cation. Glu-57 lines the substrate pocket. Substrate contacts are provided by Arg-99 and Glu-110. 4 residues coordinate Fe cation: Cys-125, Cys-128, Cys-162, and Cys-165.

The protein belongs to the 3-HAO family. Homodimer. Fe(2+) is required as a cofactor.

The catalysed reaction is 3-hydroxyanthranilate + O2 = (2Z,4Z)-2-amino-3-carboxymuconate 6-semialdehyde. It participates in cofactor biosynthesis; NAD(+) biosynthesis; quinolinate from L-kynurenine: step 3/3. In terms of biological role, catalyzes the oxidative ring opening of 3-hydroxyanthranilate to 2-amino-3-carboxymuconate semialdehyde, which spontaneously cyclizes to quinolinate. This Paraburkholderia phytofirmans (strain DSM 17436 / LMG 22146 / PsJN) (Burkholderia phytofirmans) protein is 3-hydroxyanthranilate 3,4-dioxygenase.